Here is a 560-residue protein sequence, read N- to C-terminus: Oxygen-dependent choline dehydrogenase (560 aa).

FAD is bound at residue 6–35 (DYIIVGAGSAGCVLADRLSESGDHSVLLLE). Residue H470 is the Proton acceptor of the active site.

This sequence belongs to the GMC oxidoreductase family. FAD serves as cofactor.

The catalysed reaction is choline + A = betaine aldehyde + AH2. It catalyses the reaction betaine aldehyde + NAD(+) + H2O = glycine betaine + NADH + 2 H(+). Its pathway is amine and polyamine biosynthesis; betaine biosynthesis via choline pathway; betaine aldehyde from choline (cytochrome c reductase route): step 1/1. Its function is as follows. Involved in the biosynthesis of the osmoprotectant glycine betaine. Catalyzes the oxidation of choline to betaine aldehyde and betaine aldehyde to glycine betaine at the same rate. This Vibrio vulnificus (strain YJ016) protein is Oxygen-dependent choline dehydrogenase.